The sequence spans 380 residues: Tomoregulin-1 (380 aa).

The first 39 residues, M1–A39, serve as a signal peptide directing secretion. Over S40–V330 the chain is Extracellular. Kazal-like domains lie at A98–S145 and V189–D237. 9 cysteine pairs are disulfide-bonded: C99–C129, C103–C122, C111–C143, C190–C221, C194–C214, C203–C235, C275–C288, C283–C299, and C301–C310. The EGF-like domain occupies N271–E311. The chain crosses the membrane as a helical span at residues L331–I351. The Cytoplasmic segment spans residues T352–V380. The interval N359–V380 is disordered. The span at Q366–V380 shows a compositional bias: polar residues.

It belongs to the tomoregulin family. May interact with ST14. In terms of tissue distribution, expressed predominantly in brain, and at lower levels in heart, placenta and skeletal muscle. Down-regulated in brain tumors as compared to control brain tissues.

The protein localises to the cell membrane. Functionally, neuron-specific restriction factor that prevents herpes simplex virus 1 (HHV-1) infection in the brain by blocking viral entry. Also able to restrict herpes simplex virus 2 (HHV-2) infection, although to a lesser extent. Acts by preventing the association between the viral glycoprotein D (gD) and its cell surface receptor NECTIN1, thereby inhibiting fusion of the virus and the cell membrane. Also able to prevent the association between the viral glycoprotein B (gB) and MYH9/NMMHC-IIA and MYH10/NMMHC-IIB receptors. May be a tumor suppressor in brain cancers. This is Tomoregulin-1 from Homo sapiens (Human).